The chain runs to 443 residues: Serine/threonine-protein phosphatase 2A 55 kDa regulatory subunit B beta isoform (443 aa).

WD repeat units lie at residues 22–61 (TEAD…KNQV), 87–128 (EIEE…KRPE), 171–209 (AHTY…QSFN), and 220–260 (ELTE…CVTG). Ser-275 is modified (phosphoserine). WD repeat units lie at residues 279–317 (KLSS…RPIE), 334–375 (ENDC…DVTL), and 410–442 (DFSK…QDKV). Thr-298 carries the phosphothreonine modification.

The protein belongs to the phosphatase 2A regulatory subunit B family. In terms of assembly, PP2A consists of a common heterodimeric core enzyme, composed of a 36 kDa catalytic subunit (subunit C) and a 65 kDa constant regulatory subunit (PR65 or subunit A), that associates with a variety of regulatory subunits. Proteins that associate with the core dimer include three families of regulatory subunits B (the R2/B/PR55/B55, R3/B''/PR72/PR130/PR59 and R5/B'/B56 families), the 48 kDa variable regulatory subunit, viral proteins, and cell signaling molecules. Interacts with TOMM22. Interacts with IER5 (via N- and C-terminal regions). In terms of tissue distribution, brain.

The protein resides in the cytoplasm. Its subcellular location is the cytoskeleton. The protein localises to the membrane. Its function is as follows. The B regulatory subunit might modulate substrate selectivity and catalytic activity, and might also direct the localization of the catalytic enzyme to a particular subcellular compartment. The polypeptide is Serine/threonine-protein phosphatase 2A 55 kDa regulatory subunit B beta isoform (PPP2R2B) (Sus scrofa (Pig)).